The sequence spans 316 residues: Thymidylate synthase (316 aa).

DUMP is bound by residues R23 and 178 to 179 (RR). The active-site Nucleophile is the C198. DUMP is bound by residues 218 to 221 (RSGD), N229, and 259 to 261 (HIY). (6R)-5,10-methylene-5,6,7,8-tetrahydrofolate is bound at residue D221. A (6R)-5,10-methylene-5,6,7,8-tetrahydrofolate-binding site is contributed by A315.

Belongs to the thymidylate synthase family. Bacterial-type ThyA subfamily. In terms of assembly, homodimer.

The protein resides in the cytoplasm. The catalysed reaction is dUMP + (6R)-5,10-methylene-5,6,7,8-tetrahydrofolate = 7,8-dihydrofolate + dTMP. It participates in pyrimidine metabolism; dTTP biosynthesis. Its function is as follows. Catalyzes the reductive methylation of 2'-deoxyuridine-5'-monophosphate (dUMP) to 2'-deoxythymidine-5'-monophosphate (dTMP) while utilizing 5,10-methylenetetrahydrofolate (mTHF) as the methyl donor and reductant in the reaction, yielding dihydrofolate (DHF) as a by-product. This enzymatic reaction provides an intracellular de novo source of dTMP, an essential precursor for DNA biosynthesis. The protein is Thymidylate synthase of Pediococcus pentosaceus (strain ATCC 25745 / CCUG 21536 / LMG 10740 / 183-1w).